A 307-amino-acid polypeptide reads, in one-letter code: Streptomycin 6-kinase (307 aa).

Position 133-145 (133-145) interacts with streptomycin; that stretch reads LAGLLARLVSVPA. Catalysis depends on D201, which acts as the Proton acceptor.

It belongs to the aminoglycoside phosphotransferase family.

It carries out the reaction streptomycin + ATP = streptomycin 6-phosphate + ADP + H(+). Its function is as follows. The aminoglycoside phosphotransferases achieve inactivation of their antibiotic substrates by phosphorylation. This chain is Streptomycin 6-kinase (sph), found in Streptomyces glaucescens.